Here is a 486-residue protein sequence, read N- to C-terminus: ATP-dependent rRNA helicase RRP3 (486 aa).

Residues 1–11 (MSKVTKQSKSH) are compositionally biased toward basic residues. Positions 1–52 (MSKVTKQSKSHKSSELVSLAEKIKQKALENRKQSREESQATEEANTASETEA) are disordered. Residues 17 to 49 (VSLAEKIKQKALENRKQSREESQATEEANTASE) adopt a coiled-coil conformation. Basic and acidic residues predominate over residues 21–38 (EKIKQKALENRKQSREES). Residues 41–52 (TEEANTASETEA) show a composition bias toward low complexity. The Q motif signature appears at 66-94 (SSFRELDLVPELIEACDNLNFTKPTPIQS). Residues 97–269 (IPPALQGKDI…RASLTNPVKC (173 aa)) form the Helicase ATP-binding domain. 110-117 (AQTGSGKT) contacts ATP. Positions 216-219 (DEAD) match the DEAD box motif. Residues 300–446 (LLNEFIGKTT…SIVLSLRDSV (147 aa)) enclose the Helicase C-terminal domain. The interval 459 to 486 (RRNKEKQTRGKGRRSRTATRENMDKEEE) is disordered. Basic and acidic residues predominate over residues 476–486 (ATRENMDKEEE).

Belongs to the DEAD box helicase family. DDX47/RRP3 subfamily. As to quaternary structure, interacts with the SSU processome.

Its subcellular location is the nucleus. The enzyme catalyses ATP + H2O = ADP + phosphate + H(+). Its function is as follows. ATP-dependent rRNA helicase required for pre-ribosomal RNA processing. Involved in the maturation of the 35S-pre-rRNA and to its cleavage to mature 18S rRNA. The polypeptide is ATP-dependent rRNA helicase RRP3 (Eremothecium gossypii (strain ATCC 10895 / CBS 109.51 / FGSC 9923 / NRRL Y-1056) (Yeast)).